Here is a 344-residue protein sequence, read N- to C-terminus: uncharacterized protein (344 aa).

Topologically, residues methionine 1–tyrosine 98 are cytoplasmic. A helical membrane pass occupies residues isoleucine 99–leucine 119. Histidine 120 is a topological domain (lumenal). A helical membrane pass occupies residues phenylalanine 121–leucine 141. The Cytoplasmic portion of the chain corresponds to asparagine 142–glutamate 169. A helical transmembrane segment spans residues isoleucine 170 to isoleucine 192. The Lumenal portion of the chain corresponds to threonine 193–lysine 198. Residues tyrosine 199–leucine 219 form a helical membrane-spanning segment. Over tyrosine 220–aspartate 222 the chain is Cytoplasmic. Residues valine 223 to valine 243 traverse the membrane as a helical segment. The Lumenal portion of the chain corresponds to tyrosine 244–asparagine 273. The helical transmembrane segment at alanine 274–glycine 294 threads the bilayer. Over asparagine 295–isoleucine 344 the chain is Cytoplasmic.

It is found in the endoplasmic reticulum membrane. This is an uncharacterized protein from Schizosaccharomyces pombe (strain 972 / ATCC 24843) (Fission yeast).